The chain runs to 233 residues: Homeobox protein Hox-D4a (233 aa).

Positions 124-129 (VYPWMK) match the Antp-type hexapeptide motif. The segment at residues 145–204 (PKRSRTAYTRQQVLELEKEFHFNRYLTRRRRIEIAHTLCLSERQIKIWFQNRRMKWTKDH) is a DNA-binding region (homeobox). Residues 203-233 (DHKLPNTKGRSAPASSHLQSIHKDQTDITSL) are disordered. A compositionally biased stretch (basic and acidic residues) spans 223 to 233 (IHKDQTDITSL).

This sequence belongs to the Antp homeobox family. Deformed subfamily.

Its subcellular location is the nucleus. Functionally, sequence-specific transcription factor which is part of a developmental regulatory system that provides cells with specific positional identities on the anterior-posterior axis. In Takifugu rubripes (Japanese pufferfish), this protein is Homeobox protein Hox-D4a (hoxd4a).